The primary structure comprises 114 residues: Non-specific lipid-transfer protein 1 (114 aa).

Positions 1–23 (MEMVSKIACFVLLCMVVVAPHAE) are cleaved as a signal peptide. Intrachain disulfides connect Cys27–Cys73, Cys37–Cys50, Cys51–Cys96, and Cys71–Cys110.

It belongs to the plant LTP family.

Functionally, plant non-specific lipid-transfer proteins transfer phospholipids as well as galactolipids across membranes. May play a role in wax or cutin deposition in the cell walls of expanding epidermal cells and certain secretory tissues. The polypeptide is Non-specific lipid-transfer protein 1 (TSW12) (Solanum lycopersicum (Tomato)).